The following is a 294-amino-acid chain: Nucleotide-binding protein CLD_1131 (294 aa).

8–15 (GLSGAGKT) contributes to the ATP binding site. 59 to 62 (DIRG) lines the GTP pocket.

It belongs to the RapZ-like family.

Its function is as follows. Displays ATPase and GTPase activities. The polypeptide is Nucleotide-binding protein CLD_1131 (Clostridium botulinum (strain Okra / Type B1)).